A 345-amino-acid polypeptide reads, in one-letter code: Phosphoribosylformylglycinamidine cyclo-ligase (345 aa).

The protein belongs to the AIR synthase family.

It is found in the cytoplasm. It carries out the reaction 2-formamido-N(1)-(5-O-phospho-beta-D-ribosyl)acetamidine + ATP = 5-amino-1-(5-phospho-beta-D-ribosyl)imidazole + ADP + phosphate + H(+). Its pathway is purine metabolism; IMP biosynthesis via de novo pathway; 5-amino-1-(5-phospho-D-ribosyl)imidazole from N(2)-formyl-N(1)-(5-phospho-D-ribosyl)glycinamide: step 2/2. The polypeptide is Phosphoribosylformylglycinamidine cyclo-ligase (Escherichia coli O7:K1 (strain IAI39 / ExPEC)).